Consider the following 664-residue polypeptide: UvrABC system protein B (664 aa).

In terms of domain architecture, Helicase ATP-binding spans Glu-23–Arg-180. Gly-36–Thr-43 is a binding site for ATP. The short motif at Tyr-89–Ile-112 is the Beta-hairpin element. Residues Gln-426–Leu-588 enclose the Helicase C-terminal domain. The 36-residue stretch at Glu-622–Thr-657 folds into the UVR domain.

This sequence belongs to the UvrB family. In terms of assembly, forms a heterotetramer with UvrA during the search for lesions. Interacts with UvrC in an incision complex.

The protein resides in the cytoplasm. In terms of biological role, the UvrABC repair system catalyzes the recognition and processing of DNA lesions. A damage recognition complex composed of 2 UvrA and 2 UvrB subunits scans DNA for abnormalities. Upon binding of the UvrA(2)B(2) complex to a putative damaged site, the DNA wraps around one UvrB monomer. DNA wrap is dependent on ATP binding by UvrB and probably causes local melting of the DNA helix, facilitating insertion of UvrB beta-hairpin between the DNA strands. Then UvrB probes one DNA strand for the presence of a lesion. If a lesion is found the UvrA subunits dissociate and the UvrB-DNA preincision complex is formed. This complex is subsequently bound by UvrC and the second UvrB is released. If no lesion is found, the DNA wraps around the other UvrB subunit that will check the other stand for damage. This chain is UvrABC system protein B, found in Thermotoga neapolitana (strain ATCC 49049 / DSM 4359 / NBRC 107923 / NS-E).